The primary structure comprises 40 residues: Alpha-conotoxin GIC (40 aa).

The propeptide occupies 1–20 (SDGRNDAAKAFDLISSTVKK). Intrachain disulfides connect Cys-22–Cys-28 and Cys-23–Cys-36. A ser-Xaa-Pro motif, crucial for potent interaction with nAChR region spans residues 24 to 26 (SHP). Cys-36 is subject to Cysteine amide.

As to expression, expressed by the venom duct.

The protein resides in the secreted. Alpha-conotoxins bind to the nicotinic acetylcholine receptors (nAChR) and inhibit them. This toxin reversibly blocks neuronal nAChRs (alpha-3/beta-2 = alpha-6 or -3/beta-2 or -3 &gt; alpha-3/beta-4 = alpha-4/beta-2). The chain is Alpha-conotoxin GIC from Conus geographus (Geography cone).